We begin with the raw amino-acid sequence, 413 residues long: MNTSRLFSLFFQGNLVKRIFIGLILGLLVALVTPTLQNVLGFNLAEKVGVLGTIFVRSLRAVAPILIFVLVMAAIANKKIGAKSNMKSIIVLYLLGTFLAALSAVIAGFLFPSEVALATKEDMTSAPQGVGQVLLTLVFNVVDNPLNALFKANFVGVLAWSIGLGLALRHASESTKTMVSDLAEAVSKIVYVIIAFAPIGVFGLVSETLADKGLVALGGYIHLLAVLVGTMLFVAFVVNPILVYWKIRRNPYPLVWTCVRESGLTAFFTRSSAANIPVNINLAKRLNLDEETYSVSIPLGATINMAGAAITVTILTLAAVHTLDIQISFFSALLLSVVASICACGASGVAGGSLLLIPLACSLFGVSDDVAAQMIGVGFIIGILQDSTETALNSSTDVLFTAAACIAEENKQV.

8 consecutive transmembrane segments (helical) span residues 19–39 (IFIG…LQNV), 61–81 (AVAP…KKIG), 89–109 (IIVL…IAGF), 148–168 (ALFK…GLAL), 189–209 (IVYV…SETL), 223–243 (LLAV…PILV), 297–317 (IPLG…ILTL), and 325–345 (IQIS…CACG).

This sequence belongs to the dicarboxylate/amino acid:cation symporter (DAACS) (TC 2.A.23) family.

The protein localises to the cell inner membrane. It carries out the reaction L-serine(in) + Na(+)(in) = L-serine(out) + Na(+)(out). The enzyme catalyses L-threonine(in) + Na(+)(in) = L-threonine(out) + Na(+)(out). Involved in the import of serine and threonine into the cell, with the concomitant import of sodium (symport system). This is Serine/threonine transporter SstT from Pasteurella multocida (strain Pm70).